A 165-amino-acid polypeptide reads, in one-letter code: Ubiquitin-conjugating enzyme E2 G2 (165 aa).

Ala2 is subject to N-acetylalanine. The UBC core domain occupies 4 to 164 (TALKRLMAEY…AKQIVQKSLG (161 aa)). The Glycyl thioester intermediate role is filled by Cys89.

The protein belongs to the ubiquitin-conjugating enzyme family. Interacts with AUP1 (via C-terminus); the interaction recruits UBE2G2 to lipid droplets. Interacts with ubiquitin ligases AMFR/gp78 and RNF139/TRC8; recruitment to lipid droplets by AUP1 facilitates interaction of UBE2G2 with AMFR and RNF139, leading to sterol-induced ubiquitination of 3-hydroxy-3-methylglutaryl coenzyme A reductase and its subsequent proteasomal degradation.

The protein resides in the endoplasmic reticulum. Its subcellular location is the lipid droplet. It catalyses the reaction S-ubiquitinyl-[E1 ubiquitin-activating enzyme]-L-cysteine + [E2 ubiquitin-conjugating enzyme]-L-cysteine = [E1 ubiquitin-activating enzyme]-L-cysteine + S-ubiquitinyl-[E2 ubiquitin-conjugating enzyme]-L-cysteine.. It participates in protein modification; protein ubiquitination. Functionally, accepts ubiquitin from the E1 complex and catalyzes its covalent attachment to other proteins. In vitro catalyzes 'Lys-48'-linked polyubiquitination. Involved in endoplasmic reticulum-associated degradation (ERAD). Required for sterol-induced ubiquitination of 3-hydroxy-3-methylglutaryl coenzyme A reductase and its subsequent proteasomal degradation. The protein is Ubiquitin-conjugating enzyme E2 G2 of Bos taurus (Bovine).